Here is a 231-residue protein sequence, read N- to C-terminus: MIITVDGPSGAGKGTLCYALAEKLGYALLDSGAIYRVTALAALQRKTDLTNETDLAELARHLDIQFIPQNGEVSILLAGMDVSRLIRTQEVADAASKVAVFQKVRSALLQLQQDFAKNDGLIADGRDMGTVVFPNAQVKLFLDASAEERAKRRYKQLQNKGINGNFAQILAEIKERDFRDRNREVAPLKPADDALLLDSTTLSIDEVIDQALAYIQRXGISFRFNCLFKEE.

7–15 (GPSGAGKGT) is an ATP binding site.

This sequence belongs to the cytidylate kinase family. Type 1 subfamily.

The protein localises to the cytoplasm. It carries out the reaction CMP + ATP = CDP + ADP. The catalysed reaction is dCMP + ATP = dCDP + ADP. The protein is Cytidylate kinase 1 of Haemophilus influenzae (strain ATCC 51907 / DSM 11121 / KW20 / Rd).